Here is a 266-residue protein sequence, read N- to C-terminus: 2-dehydro-3-deoxy-D-gluconate/2-dehydro-3-deoxy-phosphogluconate aldolase (266 aa).

Substrate-binding positions include 36–37, 123–125, and 151–153; these read ST, YNI, and KDS. Catalysis depends on lysine 151, which acts as the Schiff-base intermediate with substrate.

The protein belongs to the DapA family. KDPG aldolase subfamily. In terms of assembly, homotetramer; dimer of dimers.

The enzyme catalyses 2-dehydro-3-deoxy-6-phospho-D-gluconate = D-glyceraldehyde 3-phosphate + pyruvate. It carries out the reaction 2-dehydro-3-deoxy-D-gluconate = D-glyceraldehyde + pyruvate. The catalysed reaction is 2-dehydro-3-deoxy-6-phospho-D-galactonate = D-glyceraldehyde 3-phosphate + pyruvate. It catalyses the reaction 2-dehydro-3-deoxy-D-galactonate = D-glyceraldehyde + pyruvate. The protein operates within carbohydrate acid metabolism; 2-dehydro-3-deoxy-D-gluconate degradation; D-glyceraldehyde 3-phosphate and pyruvate from 2-dehydro-3-deoxy-D-gluconate: step 2/2. Involved in the degradation of glucose via the Entner-Doudoroff pathway. Catalyzes the reversible cleavage of 2-keto-3-deoxy-6-phosphogluconate (KDPG) and 2-keto-3-deoxygluconate (KDG) forming pyruvate and glyceraldehyde 3-phosphate or glyceraldehyde, respectively. It is also able to catalyze the reversible cleavage of 2-keto-3-deoxy-6-phosphogalactonate (KDPGal) and 2-keto-3-deoxygalactonate (KDGal). It is equally active with both D- and L-glyceraldehyde. This Picrophilus torridus (strain ATCC 700027 / DSM 9790 / JCM 10055 / NBRC 100828 / KAW 2/3) protein is 2-dehydro-3-deoxy-D-gluconate/2-dehydro-3-deoxy-phosphogluconate aldolase.